Reading from the N-terminus, the 135-residue chain is Transcription antitermination protein NusB (135 aa).

Residues 115-135 (ATPAESTGRGSAVDSIPGQPS) are disordered.

The protein belongs to the NusB family.

Its function is as follows. Involved in transcription antitermination. Required for transcription of ribosomal RNA (rRNA) genes. Binds specifically to the boxA antiterminator sequence of the ribosomal RNA (rrn) operons. The chain is Transcription antitermination protein NusB from Frankia casuarinae (strain DSM 45818 / CECT 9043 / HFP020203 / CcI3).